A 308-amino-acid chain; its full sequence is MIIVTGGAGFIGSNIVKALNDLGRKDILVVDNLKDGTKFANLVDLDIADYCDKEDFIASIIAGDEFGDIDAVFHEGACSATTEWDGKYIMHNNYEYSKELLHYCLDREIPFFYASSAATYGDTKVFREEREFEGPLNVYGYSKFLFDQYVRNILPEAKSPVCGFRYFNVYGPRENHKGSMASVAFHLNNQILKGENPKLFAGSEHFRRDFVYVGDVAAVNIWCWQNGISGIYNLGTGNAESFRAVADAVVKFHGKGEIETIPFPEHLKSRYQEYTQADLTKLRSTGYDKPFKTVAEGVTEYMAWLNRK.

Residues 10–11, 31–32, Lys-38, Lys-53, 75–79, and Asn-92 contribute to the NADP(+) site; these read FI, DN, and EGACS. Catalysis depends on Tyr-139, which acts as the Proton acceptor. Lys-143 serves as a coordination point for NADP(+). Residue Asn-168 coordinates substrate. The NADP(+) site is built by Val-169 and Lys-177. The Proton acceptor role is filled by Lys-177. Substrate contacts are provided by residues Ser-179, His-186, 200–203, Arg-208, and Tyr-271; that span reads FAGS.

It belongs to the NAD(P)-dependent epimerase/dehydratase family. HldD subfamily. In terms of assembly, homopentamer. Requires NADP(+) as cofactor.

The enzyme catalyses ADP-D-glycero-beta-D-manno-heptose = ADP-L-glycero-beta-D-manno-heptose. Its pathway is nucleotide-sugar biosynthesis; ADP-L-glycero-beta-D-manno-heptose biosynthesis; ADP-L-glycero-beta-D-manno-heptose from D-glycero-beta-D-manno-heptose 7-phosphate: step 4/4. It participates in bacterial outer membrane biogenesis; LOS core biosynthesis. Functionally, catalyzes the interconversion between ADP-D-glycero-beta-D-manno-heptose and ADP-L-glycero-beta-D-manno-heptose via an epimerization at carbon 6 of the heptose. This chain is ADP-L-glycero-D-manno-heptose-6-epimerase, found in Haemophilus influenzae (strain ATCC 51907 / DSM 11121 / KW20 / Rd).